Here is a 307-residue protein sequence, read N- to C-terminus: Serine/threonine-protein phosphatase PP2A-1 catalytic subunit (307 aa).

Asp-54, His-56, Asp-82, and Asn-114 together coordinate Mn(2+). His-115 serves as the catalytic Proton donor. Positions 164 and 238 each coordinate Mn(2+). The disordered stretch occupies residues 286–307 (FEPAPRRGAEGEVNRRTPDYFL). Residues 289–307 (APRRGAEGEVNRRTPDYFL) show a composition bias toward basic and acidic residues.

Belongs to the PPP phosphatase family. PP-2A subfamily. Requires Mn(2+) as cofactor.

The catalysed reaction is O-phospho-L-seryl-[protein] + H2O = L-seryl-[protein] + phosphate. The enzyme catalyses O-phospho-L-threonyl-[protein] + H2O = L-threonyl-[protein] + phosphate. This Acetabularia peniculus (Green alga) protein is Serine/threonine-protein phosphatase PP2A-1 catalytic subunit.